Consider the following 751-residue polypeptide: Disintegrin and metalloproteinase domain-containing protein 2 (751 aa).

The first 16 residues, 1 to 16 (MLRVLFLLCGLSGLRT), serve as a signal peptide directing secretion. Positions 17–173 (KENSERLHVQ…PYKVQSVQPR (157 aa)) are excised as a propeptide. Topologically, residues 17 to 702 (KENSERLHVQ…DVYQTAKPTR (686 aa)) are extracellular. N-linked (GlcNAc...) asparagine glycans are attached at residues Asn122, Asn147, Asn219, and Asn289. In terms of domain architecture, Peptidase M12B spans 177-374 (QYIEMHVVVE…QKSQCLQNLP (198 aa)). Intrachain disulfides connect Cys286–Cys369, Cys328–Cys353, and Cys330–Cys335. 5 N-linked (GlcNAc...) asparagine glycosylation sites follow: Asn352, Asn434, Asn458, Asn559, and Asn566. The Disintegrin domain occupies 383-472 (DAVCGNSIVE…LCPDDIVIQN (90 aa)). The cysteines at positions 444 and 464 are disulfide-linked. Positions 612–645 (VNLGCTLQNCNNQGICNSLQHCHCNPTFLPPNCS) constitute an EGF-like domain. 3 disulfide bridges follow: Cys616/Cys627, Cys621/Cys633, and Cys635/Cys644. N-linked (GlcNAc...) asparagine glycosylation is present at Asn643. The chain crosses the membrane as a helical span at residues 703–723 (WPFFLLIPFFIILGALIAILV). The Cytoplasmic segment spans residues 724 to 751 (KVQFQRKKWKTEDYTSDEQFESDSELKE). Ser745 is modified (phosphoserine).

As to quaternary structure, heterodimer with ADAM1/fertilin subunit alpha. In terms of processing, the signal and the metalloprotease domain are cleaved during the epididymal maturation of the spermatozoa. Expressed specifically in testis.

It localises to the membrane. Functionally, sperm surface membrane protein that may be involved in sperm-egg plasma membrane adhesion and fusion during fertilization. Could have a direct role in sperm-zona binding or migration of sperm from the uterus into the oviduct. Interactions with egg membrane could be mediated via binding between its disintegrin-like domain to one or more integrins receptors on the egg. This is a non catalytic metalloprotease-like protein. The chain is Disintegrin and metalloproteinase domain-containing protein 2 (ADAM2) from Oryctolagus cuniculus (Rabbit).